The primary structure comprises 308 residues: NAD-dependent protein deacylase SIR4 (308 aa).

A mitochondrion-targeting transit peptide spans Met-1–Ala-16. In terms of domain architecture, Deacetylase sirtuin-type spans Thr-28 to Leu-308. NAD(+) contacts are provided by residues Gly-53 to His-73 and Gln-129 to Asp-132. Catalysis depends on His-147, which acts as the Proton acceptor. Positions 155, 158, 211, and 214 each coordinate Zn(2+). NAD(+) contacts are provided by residues Gly-251–Ser-253, Asn-277–Gly-279, and Ile-297.

The protein belongs to the sirtuin family. Class II subfamily. The cofactor is Zn(2+).

It localises to the mitochondrion matrix. The catalysed reaction is N(6)-acetyl-L-lysyl-[protein] + NAD(+) + H2O = 2''-O-acetyl-ADP-D-ribose + nicotinamide + L-lysyl-[protein]. In terms of biological role, NAD-dependent protein deacylase. Catalyzes the NAD-dependent hydrolysis of acyl groups from lysine residues. In Monosiga brevicollis (Choanoflagellate), this protein is NAD-dependent protein deacylase SIR4.